Consider the following 361-residue polypeptide: MAGNTIGQLFRVTTFGESHGIALGCIIDGCPPGLSLTEKDMQHDLDRRRPGTSKYTTQRREADEVKILSGVFEGQTTGTSIGLLIENTDQRSKDYSNIQDLFRPGHADYTYHQKYGVRDYRGGGRSSARETAMRVAAGAVAKKYLKQIHGIEVRAYLSQMGAVKIDKVDWEQIEQNAFFCPDADKVDAFDELIRKLKKEGDSIGAKLTVVASNVPVGLGEPVFDRLDADVAHSLMSINAVKGVEIGDGFEVIEQRGSQHRDEMTLDGFKTNHAGGILGGISSGQNIVAHIALKPTSSITVPGETITSKGESAEVITKGRHDPCVGIRAVPIAEAMLAITLMDHLLRHRGQNADVVTTTPKI.

Basic and acidic residues predominate over residues 38–49 (EKDMQHDLDRRR). Residues 38–58 (EKDMQHDLDRRRPGTSKYTTQ) form a disordered region. R48 is an NADP(+) binding site. FMN-binding positions include 125–127 (RSS), 238–239 (NA), G278, 293–297 (KPTSS), and R319.

The protein belongs to the chorismate synthase family. Homotetramer. The cofactor is FMNH2.

It catalyses the reaction 5-O-(1-carboxyvinyl)-3-phosphoshikimate = chorismate + phosphate. It participates in metabolic intermediate biosynthesis; chorismate biosynthesis; chorismate from D-erythrose 4-phosphate and phosphoenolpyruvate: step 7/7. Functionally, catalyzes the anti-1,4-elimination of the C-3 phosphate and the C-6 proR hydrogen from 5-enolpyruvylshikimate-3-phosphate (EPSP) to yield chorismate, which is the branch point compound that serves as the starting substrate for the three terminal pathways of aromatic amino acid biosynthesis. This reaction introduces a second double bond into the aromatic ring system. The polypeptide is Chorismate synthase (Photobacterium profundum (strain SS9)).